The primary structure comprises 514 residues: 3-octaprenyl-4-hydroxybenzoate carboxy-lyase (514 aa).

Asparagine 177 is a binding site for Mn(2+). Prenylated FMN contacts are provided by residues 180-182 (IYR), 194-196 (RWL), and 199-200 (RG). Glutamate 243 contacts Mn(2+). The active-site Proton donor is the aspartate 314.

Belongs to the UbiD family. In terms of assembly, homohexamer. The cofactor is prenylated FMN. Mn(2+) serves as cofactor.

The protein localises to the cell membrane. The enzyme catalyses a 4-hydroxy-3-(all-trans-polyprenyl)benzoate + H(+) = a 2-(all-trans-polyprenyl)phenol + CO2. The protein operates within cofactor biosynthesis; ubiquinone biosynthesis. Functionally, catalyzes the decarboxylation of 3-octaprenyl-4-hydroxy benzoate to 2-octaprenylphenol, an intermediate step in ubiquinone biosynthesis. This is 3-octaprenyl-4-hydroxybenzoate carboxy-lyase from Bordetella petrii (strain ATCC BAA-461 / DSM 12804 / CCUG 43448).